The following is a 161-amino-acid chain: Regulator of ribonuclease activity A (161 aa).

The protein belongs to the RraA family. As to quaternary structure, homotrimer. Binds to both RNA-binding sites in the C-terminal region of Rne and to RhlB.

It localises to the cytoplasm. Globally modulates RNA abundance by binding to RNase E (Rne) and regulating its endonucleolytic activity. Can modulate Rne action in a substrate-dependent manner by altering the composition of the degradosome. Modulates RNA-binding and helicase activities of the degradosome. This chain is Regulator of ribonuclease activity A, found in Shigella flexneri serotype 5b (strain 8401).